We begin with the raw amino-acid sequence, 932 residues long: 2-oxoglutarate dehydrogenase E1 component (932 aa).

The protein belongs to the alpha-ketoglutarate dehydrogenase family. As to quaternary structure, homodimer. Part of the 2-oxoglutarate dehydrogenase (OGDH) complex composed of E1 (2-oxoglutarate dehydrogenase), E2 (dihydrolipoamide succinyltransferase) and E3 (dihydrolipoamide dehydrogenase); the complex contains multiple copies of the three enzymatic components (E1, E2 and E3). Thiamine diphosphate serves as cofactor.

It carries out the reaction N(6)-[(R)-lipoyl]-L-lysyl-[protein] + 2-oxoglutarate + H(+) = N(6)-[(R)-S(8)-succinyldihydrolipoyl]-L-lysyl-[protein] + CO2. Functionally, E1 component of the 2-oxoglutarate dehydrogenase (OGDH) complex which catalyzes the decarboxylation of 2-oxoglutarate, the first step in the conversion of 2-oxoglutarate to succinyl-CoA and CO(2). The polypeptide is 2-oxoglutarate dehydrogenase E1 component (Staphylococcus aureus (strain bovine RF122 / ET3-1)).